The following is a 174-amino-acid chain: Secretory-abundant heat soluble protein 2 (174 aa).

A signal peptide spans 1 to 19 (MHRFVLALVVFAGAAIVWA). The tract at residues 30 to 60 (EWTGKPWMGKWESDPSKDENVEEFKKKLQLP) is SAHS-c1. Positions 77 to 105 (YKKGDEYHHKIIINDAHYKNDIVFKLGQE) are SAHS-c2. N-linked (GlcNAc...) asparagine glycosylation occurs at Asn111. The tract at residues 118–172 (KYEDKDGALVGSVHYTGTKEQSLDKTINNVFKLEGDHLVKTSTIEGVTMKRHYNK) is SAHS-c3.

It belongs to the Secretory-abundant heat soluble protein (SAHS) family.

It localises to the secreted. Its function is as follows. Secreted heat soluble protein acting as a molecular shield in water-deficient condition. Tardigrade-specific intrinsically disordered proteins (TDPs) are essential for desiccation tolerance by forming non-crystalline amorphous solids upon desiccation, and this vitrified state mirrors their protective capabilities. This is Secretory-abundant heat soluble protein 2 from Ramazzottius varieornatus (Water bear).